Reading from the N-terminus, the 62-residue chain is Photosystem II reaction center protein Z (62 aa).

The next 2 membrane-spanning stretches (helical) occupy residues 8–28 and 41–61; these read ALFAFIVVSFLLVVGVPVVLA and FSGIGIWFLLVFLVGILNSFV.

It belongs to the PsbZ family. As to quaternary structure, PSII is composed of 1 copy each of membrane proteins PsbA, PsbB, PsbC, PsbD, PsbE, PsbF, PsbH, PsbI, PsbJ, PsbK, PsbL, PsbM, PsbT, PsbY, PsbZ, Psb30/Ycf12, at least 3 peripheral proteins of the oxygen-evolving complex and a large number of cofactors. It forms dimeric complexes.

It localises to the plastid. It is found in the chloroplast thylakoid membrane. May control the interaction of photosystem II (PSII) cores with the light-harvesting antenna, regulates electron flow through the 2 photosystem reaction centers. PSII is a light-driven water plastoquinone oxidoreductase, using light energy to abstract electrons from H(2)O, generating a proton gradient subsequently used for ATP formation. The chain is Photosystem II reaction center protein Z from Chlorella vulgaris (Green alga).